A 110-amino-acid polypeptide reads, in one-letter code: MSTSELATSYAALILADDGVDITADKLQSLIKAAKIEEVEPIWTTLFAKALEGKDVKDLLLNVGSGGGAAPLPEALLLRWRAADAAPAAEEKKEEEKEESDEDMGFGLFD.

A disordered region spans residues 87–110 (PAAEEKKEEEKEESDEDMGFGLFD).

The protein belongs to the eukaryotic ribosomal protein P1/P2 family. In terms of assembly, P1 and P2 exist as dimers at the large ribosomal subunit. Phosphorylated.

In terms of biological role, plays an important role in the elongation step of protein synthesis. The protein is Large ribosomal subunit protein P1 (ALTA12) of Alternaria alternata (Alternaria rot fungus).